Here is a 422-residue protein sequence, read N- to C-terminus: Serine protease HTRA2, mitochondrial (422 aa).

Residues 1–17 (MALRGSHRLQVILKRCI) constitute a mitochondrion transit peptide. Positions 18-74 (ASPLFHSHAPNRRSSQPAIKGGEPNSNGNSGHDQQNGERKGKGWRRLVSFFVPFSLG) are excised as a propeptide. Residues 24 to 56 (SHAPNRRSSQPAIKGGEPNSNGNSGHDQQNGER) form a disordered region. The span at 41-51 (PNSNGNSGHDQ) shows a compositional bias: polar residues. A helical transmembrane segment spans residues 64–82 (LVSFFVPFSLGAVVSAAVI). 2 consecutive short sequence motifs (IAP-binding) follow at residues 75 to 78 (AVVS) and 94 to 97 (SKMT). The serine protease stretch occupies residues 139–302 (SNGSGFIIEQ…IPIDYVKVFL (164 aa)). Catalysis depends on charge relay system residues H157, D189, and S266. The PDZ domain maps to 325 to 410 (MGITMLTLTP…NLDIVILRGV (86 aa)).

It belongs to the peptidase S1C family. As to quaternary structure, interacts with th/DIAP1 (via BIR 2 domain).

The protein resides in the mitochondrion intermembrane space. The protein localises to the mitochondrion membrane. It catalyses the reaction Cleavage of non-polar aliphatic amino-acids at the P1 position, with a preference for Val, Ile and Met. At the P2 and P3 positions, Arg is selected most strongly with a secondary preference for other hydrophilic residues.. Functionally, serine protease that shows proteolytic activity against a non-specific substrate beta-casein. Promotes or induces cell death either by direct binding to and inhibition of BIRC proteins (also called inhibitor of apoptosis proteins, IAPs), leading to an increase in caspase activity, or by a BIRC inhibition-independent, caspase-independent and serine protease activity-dependent mechanism. Can antagonize antiapoptotic activity of th/Diap1 by directly inducing the degradation of th/Diap1. The sequence is that of Serine protease HTRA2, mitochondrial from Drosophila erecta (Fruit fly).